Reading from the N-terminus, the 159-residue chain is Transcriptional repressor NrdR (159 aa).

The segment at 3 to 34 (CPFCGSDNTSVKDSRAAEDDTAVRRRRVCESC) is a zinc-finger region. Residues 49 to 139 (IIVVKRDGKR…VYRDFKDPSD (91 aa)) enclose the ATP-cone domain.

It belongs to the NrdR family. The cofactor is Zn(2+).

Functionally, negatively regulates transcription of bacterial ribonucleotide reductase nrd genes and operons by binding to NrdR-boxes. This chain is Transcriptional repressor NrdR, found in Hyphomonas neptunium (strain ATCC 15444).